Consider the following 478-residue polypeptide: Zinc metalloproteinase/disintegrin (478 aa).

Positions 1-20 are cleaved as a signal peptide; the sequence is MIQVLLVTICLAVFPYQGSS. Positions 21 to 194 are excised as a propeptide; sequence KTLKSGNVND…KASQLNLTPE (174 aa). Pyrrolidone carboxylic acid is present on glutamine 195. The region spanning 201-397 is the Peptidase M12B domain; that stretch reads RYIELVIVAD…RNPQCILNQP (197 aa). Positions 204 and 288 each coordinate Ca(2+). 3 disulfides stabilise this stretch: cysteine 312–cysteine 392, cysteine 352–cysteine 376, and cysteine 354–cysteine 359. Residue histidine 337 participates in Zn(2+) binding. Glutamate 338 is a catalytic residue. Histidine 341 and histidine 347 together coordinate Zn(2+). Cysteine 392 and asparagine 395 together coordinate Ca(2+). A propeptide spanning residues 398-413 is cleaved from the precursor; it reads LRTDTVSTPVSGNELL. The Disintegrin domain occupies 405 to 478; the sequence is TPVSGNELLQ…SDCPRNPYKD (74 aa). Disulfide bonds link cysteine 420–cysteine 443, cysteine 434–cysteine 440, cysteine 439–cysteine 464, and cysteine 452–cysteine 471. The short motif at 456 to 458 is the Cell attachment site; atypical (VGD) element; the sequence is VGD.

This sequence belongs to the venom metalloproteinase (M12B) family. P-II subfamily. P-IIe sub-subfamily. As to quaternary structure, monomer (metalloproteinase). Heterodimer; disulfide-linked (disintegrin). The cofactor is Zn(2+). In terms of tissue distribution, expressed by the venom gland.

The protein localises to the secreted. With respect to regulation, fibrinolytic and caseinolytic activities are inhibited by Cd(2+), Cu(2+) and Co(2+) ions. Not inhibited by Mg(2+), Ca(2+) and Ba(2+). Also inhibited by EDTA, EGTA and 1,10-phenanthroline. Fibrinolytic and fibrinogenolytic metalloproteinase that hydrolyzes the Aalpha-chain and more slowly the Bbeta-chain of fibrin and fibrinogen. Its fibrinolytic activity is direct, without any plasminogen activation. Also hydrolyzes casein and B-chain of oxidized insulin. Inhibits ADP-induced and collagen-induced platelet aggregation. Shows low hemorrhagic activity. Cleaves the plasma proteinase inhibitors alpha(2)-macroglobulin (A2M) and pregnancy zone protein (PZP), and is inhibited by them. The metalloprotease has no strict P1-P1' specificity requirement. Hydrolysis at sites with a Pro residue at P1 is observed with bradykinin, substance P, PZP and alpha chain fibrinogen (FGA). Its function is as follows. Poor inhibitor of platelet aggregation. The disintegrin inhibits the adhesion of the alpha-4/beta-1 (ITGA4/ITGB1) integrin to VCAM-1. Inhibition on alpha-2b/beta-3 (ITGA2B/ITGB3) is low. In Macrovipera lebetinus (Levantine viper), this protein is Zinc metalloproteinase/disintegrin.